The sequence spans 330 residues: Malate dehydrogenase (330 aa).

NAD(+) is bound at residue 12 to 18; the sequence is GAAGQIG. Arg-93 and Arg-99 together coordinate substrate. NAD(+) is bound by residues Asn-106, Gln-113, and 130 to 132; that span reads VGN. Residues Asn-132 and Arg-163 each coordinate substrate. His-188 functions as the Proton acceptor in the catalytic mechanism.

Belongs to the LDH/MDH superfamily. MDH type 2 family.

It carries out the reaction (S)-malate + NAD(+) = oxaloacetate + NADH + H(+). In terms of biological role, catalyzes the reversible oxidation of malate to oxaloacetate. This Thermobifida fusca (strain YX) protein is Malate dehydrogenase.